Here is a 322-residue protein sequence, read N- to C-terminus: Mitochondrial thiamine pyrophosphate carrier 1 (322 aa).

3 Solcar repeats span residues 12 to 111 (GSKT…VTLA), 122 to 208 (PAAA…LRVP), and 215 to 310 (PFGS…VLRL). 6 consecutive transmembrane segments (helical) span residues 18–38 (MIAG…LDVV), 92–108 (LMYV…YRSV), 128–148 (FIAG…LDLL), 180–200 (FFQG…IFFA), 221–241 (ATAG…FDLI), and 285–302 (GLTV…VTMW).

This sequence belongs to the mitochondrial carrier (TC 2.A.29) family.

It is found in the mitochondrion inner membrane. Its function is as follows. Mitochondrial transporter that mediates uptake of thiamine pyrophosphate (ThPP) into mitochondria. The chain is Mitochondrial thiamine pyrophosphate carrier 1 (tpc1) from Sclerotinia sclerotiorum (strain ATCC 18683 / 1980 / Ss-1) (White mold).